Here is a 571-residue protein sequence, read N- to C-terminus: Leucine aminopeptidase A1, chloroplastic (571 aa).

A chloroplast-targeting transit peptide spans 1 to 53; the sequence is MATLRVSSLFASSSSSLHSNPSVFTKYQSSPKWAFSFPVTPLCSKRSKRIVHC. Residues Lys342 and Asp347 each contribute to the Mg(2+) site. Lys354 is an active-site residue. 3 residues coordinate Mg(2+): Asp367, Asp427, and Glu429. Residue Arg431 is part of the active site.

The protein belongs to the peptidase M17 family. Homohexamer (dimer of homotrimers). The cofactor is Mg(2+). In terms of tissue distribution, observed during floral development. Expressed in healthy and senescent leaves, cotyledons (emergence from seed coats), pistils, sepals, petals, stamens, and floral buds (at protein level). Present at very low levels in healthy leaves.

It is found in the plastid. Its subcellular location is the chloroplast. The catalysed reaction is Release of an N-terminal amino acid, Xaa-|-Yaa-, in which Xaa is preferably Leu, but may be other amino acids including Pro although not Arg or Lys, and Yaa may be Pro. Amino acid amides and methyl esters are also readily hydrolyzed, but rates on arylamides are exceedingly low.. It catalyses the reaction Release of N-terminal proline from a peptide.. Its function is as follows. Catalyzes the removal of unsubstituted N-terminal amino acids from various peptides. When associated as homohexamer, catalyzes the proteolyzes of Xaa-Leu dipeptides. Possesses leucine aminopeptidase activity against the model substrate leucine-amido methyl coumarin. Presumably involved in the processing and regular turnover of intracellular proteins. Regulates wound signaling and has a role in insect defense. Functions as a molecular chaperone to protect proteins from heat-induced damage. This chain is Leucine aminopeptidase A1, chloroplastic, found in Solanum lycopersicum (Tomato).